The primary structure comprises 327 residues: Phenylalanine--tRNA ligase alpha subunit (327 aa).

E252 contacts Mg(2+).

This sequence belongs to the class-II aminoacyl-tRNA synthetase family. Phe-tRNA synthetase alpha subunit type 1 subfamily. As to quaternary structure, tetramer of two alpha and two beta subunits. Mg(2+) serves as cofactor.

Its subcellular location is the cytoplasm. It catalyses the reaction tRNA(Phe) + L-phenylalanine + ATP = L-phenylalanyl-tRNA(Phe) + AMP + diphosphate + H(+). This is Phenylalanine--tRNA ligase alpha subunit from Glaesserella parasuis serovar 5 (strain SH0165) (Haemophilus parasuis).